The sequence spans 187 residues: Peptide deformylase 2 (187 aa).

2 residues coordinate Fe cation: Cys-107 and His-149. Residue Glu-150 is part of the active site. His-153 is a Fe cation binding site.

This sequence belongs to the polypeptide deformylase family. Requires Fe(2+) as cofactor.

It carries out the reaction N-terminal N-formyl-L-methionyl-[peptide] + H2O = N-terminal L-methionyl-[peptide] + formate. In terms of biological role, removes the formyl group from the N-terminal Met of newly synthesized proteins. Requires at least a dipeptide for an efficient rate of reaction. N-terminal L-methionine is a prerequisite for activity but the enzyme has broad specificity at other positions. In Gloeobacter violaceus (strain ATCC 29082 / PCC 7421), this protein is Peptide deformylase 2.